The following is a 501-amino-acid chain: Aspartate--tRNA ligase, cytoplasmic (501 aa).

T52 carries the phosphothreonine modification. At K74 the chain carries N6-acetyllysine. E229 lines the L-aspartate pocket. At S249 the chain carries Phosphoserine. Residues 251–254 (QLYK) form an aspartate region. L-aspartate is bound at residue R273. Residues 273 to 275 (RAE) and 281 to 283 (RHL) contribute to the ATP site. K374 is subject to N6-acetyllysine. The binding site for the 3'-end of tRNA stretch occupies residues 411 to 415 (KQSNS). ATP is bound at residue E424. S427 and R431 together coordinate L-aspartate. ATP is bound at residue 472–475 (GLER). Phosphothreonine; by PKA is present on T500.

This sequence belongs to the class-II aminoacyl-tRNA synthetase family. Type 2 subfamily. In terms of assembly, homodimer. Part of a multisubunit complex that groups tRNA ligases for Arg (RARS1), Asp (DARS1), Gln (QARS1), Ile (IARS1), Leu (LARS1), Lys (KARS1), Met (MARS1) the bifunctional ligase for Glu and Pro (EPRS1) and the auxiliary subunits AIMP1/p43, AIMP2/p38 and EEF1E1/p18. As to expression, expression in the developing and adult brain shows similar patterns. Highly expressed in the ventricular and subventricular zones, including hippocampal subfields, the midlateral temporal cortex and the frontal polar cortex. The cerebellum, cerebral cortex, hippocampus, and lateral ventricle show preferential neuronal expression. Expression in the peripheral neurons is evident in the colon.

Its subcellular location is the cytoplasm. It localises to the cytosol. The catalysed reaction is tRNA(Asp) + L-aspartate + ATP = L-aspartyl-tRNA(Asp) + AMP + diphosphate. Catalyzes the specific attachment of an amino acid to its cognate tRNA in a 2 step reaction: the amino acid (AA) is first activated by ATP to form AA-AMP and then transferred to the acceptor end of the tRNA. This chain is Aspartate--tRNA ligase, cytoplasmic, found in Homo sapiens (Human).